Reading from the N-terminus, the 281-residue chain is MKVNLMLKRGLATATATASSAPPKIKVGVLLSRIPIIKSELNELEKKYYEYQSELEKRLMWTFPAYFYFKKGTVAEHKFLSLQKGPISKKNGIWFPRGIPDIKHGRERSTKQEVKLSDDSTVAFSNNQKEQSKDDVNRPVIPNDRITEADRSNDMKSLERQLSRTLYLLVKDKSGTWKFPNFDLSDESKPLHVHAENELKLLSGDQIYTWSVSATPIGVLQDERNRTAEFIVKSHILAGKFDLVASKNDAFEDFAWLTKGEISEYVPKDYFNKTEFLLADN.

The transit peptide at methionine 1–serine 19 directs the protein to the mitochondrion. Over residues arginine 106–aspartate 118 the composition is skewed to basic and acidic residues. Residues arginine 106 to isoleucine 141 are disordered. Over residues aspartate 119–lysine 129 the composition is skewed to polar residues.

This sequence belongs to the mitochondrion-specific ribosomal protein mL46 family. As to quaternary structure, component of the mitochondrial large ribosomal subunit (mt-LSU). Mature yeast 74S mitochondrial ribosomes consist of a small (37S) and a large (54S) subunit. The 37S small subunit contains a 15S ribosomal RNA (15S mt-rRNA) and 34 different proteins. The 54S large subunit contains a 21S rRNA (21S mt-rRNA) and 46 different proteins.

The protein localises to the mitochondrion. Functionally, component of the mitochondrial ribosome (mitoribosome), a dedicated translation machinery responsible for the synthesis of mitochondrial genome-encoded proteins, including at least some of the essential transmembrane subunits of the mitochondrial respiratory chain. The mitoribosomes are attached to the mitochondrial inner membrane and translation products are cotranslationally integrated into the membrane. In Saccharomyces cerevisiae (strain ATCC 204508 / S288c) (Baker's yeast), this protein is Large ribosomal subunit protein mL46 (MRPL17).